A 335-amino-acid polypeptide reads, in one-letter code: Serpentine receptor class gamma-11 (335 aa).

The next 7 membrane-spanning stretches (helical) occupy residues 33-53 (FLQI…LYTI), 66-86 (FFLI…LDII), 98-118 (PIIA…MIVL), 154-174 (LKYL…NLII), 202-222 (FQLI…SVIF), 242-262 (GTAY…LFAF), and 271-291 (TIFG…PIIM).

Belongs to the nematode receptor-like protein srg family.

The protein localises to the membrane. This chain is Serpentine receptor class gamma-11 (srg-11), found in Caenorhabditis elegans.